Here is a 905-residue protein sequence, read N- to C-terminus: Sun domain-containing protein 1 (905 aa).

Disordered stretches follow at residues 1–21 (MSGDYKPNYQSSPSRKRLPLQ), 41–166 (NNTV…ILKQ), and 207–242 (QQQQQQQRNNNNNSNSSNNNNTSTTIKRNNQQIDNN). Topologically, residues 1–290 (MSGDYKPNYQ…NNNNKVNFKQ (290 aa)) are nuclear. Low complexity-rich tracts occupy residues 41–67 (NNTVNNNSSNNSNNHLLHNSNPNSSYL) and 75–101 (SNQINIRNNSNSNSNTNNITSKKASSS). Residues 107–116 (KVDHNSHNNN) are compositionally biased toward basic and acidic residues. A compositionally biased stretch (acidic residues) spans 117–126 (DDDDIEDDVD). A compositionally biased stretch (polar residues) spans 129–146 (YSTNNASSNILHNRFSNS). Residues 170-221 (LYNHLNNQIQQQQQQQQQQQQQQQQQQQQQQQQQQQQQQQQQQQRNNNNNSN) adopt a coiled-coil conformation. Over residues 207–227 (QQQQQQQRNNNNNSNSSNNNN) the composition is skewed to low complexity. A helical transmembrane segment spans residues 291 to 311 (AIWIFIFSVLFIGCLLGLFST). Topologically, residues 312 to 905 (NFYGIHIYFP…IEKQQQSDEL (594 aa)) are perinuclear space. Coiled coils occupy residues 359–456 (KKNE…QLIQ) and 504–609 (REFN…TQQF). Positions 662 to 860 (GASIEYNALH…YRFRVHGYQI (199 aa)) constitute an SUN domain. Positions 864 to 901 (EQEQIQIIQEEQSFKQEEINQQQIEQIEQIEQIEKQQQ) form a coiled coil.

In terms of assembly, homodimer and homooligomer.

Its subcellular location is the nucleus membrane. May have an important role in defining the spacing of the nuclear envelope lumen. Essential for centrosome attachment to the nucleus, maintenance of correct ploidy, proper mitosis, association of the centromere cluster with the centrosome and the maintenance of genome stability. Requires direct chromatin binding for inner nuclear membrane targeting. The protein is Sun domain-containing protein 1 (sun1) of Dictyostelium discoideum (Social amoeba).